The sequence spans 331 residues: tRNA-cytidine(32) 2-sulfurtransferase (331 aa).

A PP-loop motif motif is present at residues 71 to 76 (SGGKDS). Positions 146, 149, and 237 each coordinate [4Fe-4S] cluster.

This sequence belongs to the TtcA family. As to quaternary structure, homodimer. It depends on Mg(2+) as a cofactor. [4Fe-4S] cluster serves as cofactor.

The protein localises to the cytoplasm. The catalysed reaction is cytidine(32) in tRNA + S-sulfanyl-L-cysteinyl-[cysteine desulfurase] + AH2 + ATP = 2-thiocytidine(32) in tRNA + L-cysteinyl-[cysteine desulfurase] + A + AMP + diphosphate + H(+). It participates in tRNA modification. Functionally, catalyzes the ATP-dependent 2-thiolation of cytidine in position 32 of tRNA, to form 2-thiocytidine (s(2)C32). The sulfur atoms are provided by the cysteine/cysteine desulfurase (IscS) system. This is tRNA-cytidine(32) 2-sulfurtransferase from Burkholderia multivorans (strain ATCC 17616 / 249).